A 68-amino-acid chain; its full sequence is uncharacterized protein (68 aa).

This is an uncharacterized protein from Rickettsia prowazekii (strain Madrid E).